The following is an 827-amino-acid chain: Endoribonuclease YSH1 (827 aa).

H96, H98, D100, H101, H184, and D205 together coordinate Zn(2+). H426 acts as the Proton donor in catalysis. Zn(2+) is bound at residue H448. A compositionally biased stretch (acidic residues) spans 583-592 (EDDVAEEEED). Disordered regions lie at residues 583–621 (EDDV…KEEE) and 802–827 (DREE…KEEE). Residues 606-621 (GEVKDETAEEVKKEEE) are compositionally biased toward basic and acidic residues.

It belongs to the metallo-beta-lactamase superfamily. RNA-metabolizing metallo-beta-lactamase-like family. CPSF2/YSH1 subfamily.

It localises to the nucleus. Its function is as follows. Component of the cleavage factor I (CF I) involved in pre-mRNA 3'-end processing. The chain is Endoribonuclease YSH1 (YSH1) from Yarrowia lipolytica (strain CLIB 122 / E 150) (Yeast).